Consider the following 413-residue polypeptide: Histidinol-phosphate aminotransferase, chloroplastic (413 aa).

The transit peptide at 1 to 35 (MGVIELCNTSSICIGRAKPSCCSIERNQRRRIICM) directs the protein to the chloroplast. An N6-(pyridoxal phosphate)lysine modification is found at Lys273.

It belongs to the class-II pyridoxal-phosphate-dependent aminotransferase family. Histidinol-phosphate aminotransferase subfamily. As to quaternary structure, homodimer. Requires pyridoxal 5'-phosphate as cofactor. Mainly expressed in green tissues.

Its subcellular location is the plastid. The protein resides in the chloroplast. It carries out the reaction L-histidinol phosphate + 2-oxoglutarate = 3-(imidazol-4-yl)-2-oxopropyl phosphate + L-glutamate. The protein operates within amino-acid biosynthesis; L-histidine biosynthesis; L-histidine from 5-phospho-alpha-D-ribose 1-diphosphate: step 7/9. The sequence is that of Histidinol-phosphate aminotransferase, chloroplastic (HPA) from Nicotiana tabacum (Common tobacco).